The chain runs to 255 residues: Triosephosphate isomerase (255 aa).

Residue 9–11 (NWK) participates in substrate binding. His-95 (electrophile) is an active-site residue. Glu-167 serves as the catalytic Proton acceptor. Substrate contacts are provided by residues Gly-173, Ser-212, and 233–234 (GG).

This sequence belongs to the triosephosphate isomerase family. In terms of assembly, homodimer.

It localises to the cytoplasm. The enzyme catalyses D-glyceraldehyde 3-phosphate = dihydroxyacetone phosphate. The protein operates within carbohydrate biosynthesis; gluconeogenesis. It participates in carbohydrate degradation; glycolysis; D-glyceraldehyde 3-phosphate from glycerone phosphate: step 1/1. Involved in the gluconeogenesis. Catalyzes stereospecifically the conversion of dihydroxyacetone phosphate (DHAP) to D-glyceraldehyde-3-phosphate (G3P). This Yersinia pseudotuberculosis serotype O:1b (strain IP 31758) protein is Triosephosphate isomerase.